A 129-amino-acid polypeptide reads, in one-letter code: MPLLRFDLIEGRDQSSLKKLLDVAHNVVVEAFDVPQQDRYQIVHEHPENHMIIEDTGLGFNRTKNLVVLSVTSKSRPEEKKQKFYRLLAERLESECGIASTDLIVSIVENDNADWSFGLGEAQFLTGKL.

Catalysis depends on Pro-2, which acts as the Proton acceptor; via imino nitrogen.

Belongs to the 4-oxalocrotonate tautomerase family.

Functionally, putative target of GltR. This chain is Probable tautomerase YrdN (yrdN), found in Bacillus subtilis (strain 168).